The sequence spans 250 residues: Proteasome subunit alpha (250 aa).

Belongs to the peptidase T1A family. As to quaternary structure, the 20S proteasome core is composed of 14 alpha and 14 beta subunits that assemble into four stacked heptameric rings, resulting in a barrel-shaped structure. The two inner rings, each composed of seven catalytic beta subunits, are sandwiched by two outer rings, each composed of seven alpha subunits. The catalytic chamber with the active sites is on the inside of the barrel. Has a gated structure, the ends of the cylinder being occluded by the N-termini of the alpha-subunits. Is capped by the proteasome-associated ATPase, ARC.

The protein localises to the cytoplasm. Its pathway is protein degradation; proteasomal Pup-dependent pathway. The formation of the proteasomal ATPase ARC-20S proteasome complex, likely via the docking of the C-termini of ARC into the intersubunit pockets in the alpha-rings, may trigger opening of the gate for substrate entry. Interconversion between the open-gate and close-gate conformations leads to a dynamic regulation of the 20S proteasome proteolysis activity. Its function is as follows. Component of the proteasome core, a large protease complex with broad specificity involved in protein degradation. The sequence is that of Proteasome subunit alpha from Mycobacterium sp. (strain JLS).